The chain runs to 552 residues: Hydroxylamine reductase (552 aa).

[4Fe-4S] cluster is bound by residues Cys3, Cys6, Cys15, and Cys21. Residues His247, Glu271, Cys315, Cys407, Cys435, Cys460, Glu495, and Lys497 each contribute to the hybrid [4Fe-2O-2S] cluster site. The residue at position 407 (Cys407) is a Cysteine persulfide.

The protein belongs to the HCP family. [4Fe-4S] cluster serves as cofactor. It depends on hybrid [4Fe-2O-2S] cluster as a cofactor.

The protein resides in the cytoplasm. The catalysed reaction is A + NH4(+) + H2O = hydroxylamine + AH2 + H(+). Its function is as follows. Catalyzes the reduction of hydroxylamine to form NH(3) and H(2)O. The chain is Hydroxylamine reductase from Thermosipho melanesiensis (strain DSM 12029 / CIP 104789 / BI429).